The sequence spans 562 residues: Putative transport protein PC1_1686 (562 aa).

A run of 6 helical transmembrane segments spans residues 8–28 (LLNG…LCLG), 32–52 (LGPV…LLGQ), 66–86 (FMLF…SIFF), 93–113 (FMLA…LGKF), 116–136 (WGIG…PVLV), and 158–178 (HLSL…IFGA). 2 RCK C-terminal domains span residues 202-288 (LDAD…NFRD) and 292-373 (VFDR…RIGF). The next 5 membrane-spanning stretches (helical) occupy residues 383-403 (LLAF…TIQF), 406-426 (FTFG…LGFL), 447-467 (FGLM…INSS), 478-498 (SGLI…AYVL), and 537-557 (GTYA…VIIW).

The protein belongs to the AAE transporter (TC 2.A.81) family. YbjL subfamily.

The protein resides in the cell membrane. The chain is Putative transport protein PC1_1686 from Pectobacterium carotovorum subsp. carotovorum (strain PC1).